The primary structure comprises 564 residues: Centrosomal protein kizuna (564 aa).

A disordered region spans residues 1-21 (MSEAGRAAAGPCPEVSPSRSQ). Positions 28 to 50 (RCLRDSETRRLELERKLMEYKSS) form a coiled coil. 5 disordered regions span residues 178 to 201 (QPAA…PTQA), 304 to 345 (TGPQ…EDEP), 442 to 465 (ECGD…PNDS), 487 to 519 (IGNN…RPEF), and 531 to 564 (AFWG…DFYD). A compositionally biased stretch (low complexity) spans 313-324 (QQAASQDSSSSS). The span at 447 to 463 (SSVQSNESSYSLPSIPN) shows a compositional bias: polar residues. A compositionally biased stretch (basic and acidic residues) spans 493-519 (EAKESQEMCSERSSSSERSGDLSRPEF).

Belongs to the kizuna family.

Its subcellular location is the cytoplasm. It localises to the cytoskeleton. It is found in the microtubule organizing center. The protein resides in the centrosome. The protein localises to the cilium basal body. Centrosomal protein required for establishing a robust mitotic centrosome architecture that can endure the forces that converge on the centrosomes during spindle formation. Required for stabilizing the expanded pericentriolar material around the centriole. This is Centrosomal protein kizuna (KIZ) from Gallus gallus (Chicken).